Consider the following 380-residue polypeptide: Protein Wnt-5a (380 aa).

Residues 1 to 35 (MKKSIGILSPGVALGMAGSAMSSKFFLVALAIFFS) form the signal peptide. The propeptide occupies 36–61 (FAQVVIEANSWWSLGMNNPVQMSEVY). Cysteines 104 and 115 form a disulfide. Asparagine 114 and asparagine 120 each carry an N-linked (GlcNAc...) asparagine glycan. 10 disulfide bridges follow: cysteine 154–cysteine 162, cysteine 164–cysteine 182, cysteine 238–cysteine 252, cysteine 240–cysteine 247, cysteine 309–cysteine 340, cysteine 325–cysteine 335, cysteine 339–cysteine 379, cysteine 355–cysteine 370, cysteine 357–cysteine 367, and cysteine 362–cysteine 363. Serine 244 is lipidated: O-palmitoleoyl serine; by PORCN. Asparagine 312 and asparagine 326 each carry an N-linked (GlcNAc...) asparagine glycan.

This sequence belongs to the Wnt family. Forms a soluble 1:1 complex with AFM; this prevents oligomerization and is required for prolonged biological activity. The complex with AFM may represent the physiological form in body fluids. Homooligomer; disulfide-linked, leading to inactivation (in vitro). Interacts with PORCN. Interacts with WLS. Interacts with glypican GCP3. Interacts with PKD1 (via extracellular domain). Interacts with TMEM67. Post-translationally, glycosylation is necessary for secretion but not for activity. Palmitoleoylation is required for efficient binding to frizzled receptors. Depalmitoleoylation leads to Wnt signaling pathway inhibition. In terms of processing, proteolytic processing by TIKI1 and TIKI2 promotes oxidation and formation of large disulfide-bond oligomers, leading to inactivation of WNT5A. Expression is increased in differentiated thyroid carcinomas compared to normal thyroid tissue and anaplastic thyroid tumors where expression is low or undetectable. Expression is found in thyrocytes but not in stromal cells (at protein level). Detected in neonate heart and lung.

The protein resides in the secreted. The protein localises to the extracellular space. Its subcellular location is the extracellular matrix. Functionally, ligand for members of the frizzled family of seven transmembrane receptors. Can activate or inhibit canonical Wnt signaling, depending on receptor context. In the presence of FZD4, activates beta-catenin signaling. In the presence of ROR2, inhibits the canonical Wnt pathway by promoting beta-catenin degradation through a GSK3-independent pathway which involves down-regulation of beta-catenin-induced reporter gene expression. Suppression of the canonical pathway allows chondrogenesis to occur and inhibits tumor formation. Stimulates cell migration. Decreases proliferation, migration, invasiveness and clonogenicity of carcinoma cells and may act as a tumor suppressor. Mediates motility of melanoma cells. Required during embryogenesis for extension of the primary anterior-posterior axis and for outgrowth of limbs and the genital tubercle. Inhibits type II collagen expression in chondrocytes. This Homo sapiens (Human) protein is Protein Wnt-5a (WNT5A).